The sequence spans 56 residues: Ovomucoid (56 aa).

In terms of domain architecture, Kazal-like spans 6 to 56 (VDCSEYPKPDCTTEERPLCGSDNKTYGNKCNFCNAVVESNGTLTLSHFGKC). 3 disulfide bridges follow: cysteine 8–cysteine 38, cysteine 16–cysteine 35, and cysteine 24–cysteine 56. The N-linked (GlcNAc...) asparagine glycan is linked to asparagine 45.

It localises to the secreted. The protein is Ovomucoid of Francolinus pondicerianus (Grey francolin).